Reading from the N-terminus, the 466-residue chain is Coagulation factor IX (466 aa).

The first 25 residues, 1–25 (MRCLNMIMAEPPGLITICLLGYLLG), serve as a signal peptide directing secretion. A propeptide spanning residues 26-46 (ADCTVFLDHEDATKVLSRPKR) is cleaved from the precursor. Ca(2+)-binding residues include Tyr47, Asn48, Glu53, Glu54, Glu61, Glu63, Glu66, Glu67, Glu72, Glu73, and Glu76. One can recognise a Gla domain in the interval 47–92 (YNSGKLEEFVQGNLERECMEEKCSFEEAREVFENTEKTTEFWKQYV). 4-carboxyglutamate is present on residues Glu53, Glu54, Glu61, Glu63, Glu66, Glu67, Glu72, Glu73, Glu76, Glu79, and Glu82. Residue Glu61 coordinates Mg(2+). Cys64 and Cys69 form a disulfide bridge. Glu66 contacts Mg(2+). Glu72 lines the Mg(2+) pocket. Glu76 provides a ligand contact to Mg(2+). Position 82 (Glu82) interacts with Ca(2+). Glu82 is a Mg(2+) binding site. Thr85 carries O-linked (GalNAc...) threonine glycosylation. 4 residues coordinate Ca(2+): Glu86, Asp93, Gly94, and Gln96. 4-carboxyglutamate is present on Glu86. Glu86 is a binding site for Mg(2+). The EGF-like 1; calcium-binding domain maps to 93–129 (DGDQCESNPCLNGGICKDDINSYECWCQTGFEGKNCE). Disulfide bonds link Cys97–Cys108, Cys102–Cys117, Cys119–Cys128, Cys134–Cys145, Cys141–Cys155, Cys157–Cys170, Cys178–Cys340, Cys257–Cys273, Cys387–Cys401, and Cys412–Cys440. Residue Ser99 is glycosylated (O-linked (Glc...) serine). Residues Asp110 and Asp111 each coordinate Ca(2+). Residue Asp110 is modified to (3R)-3-hydroxyaspartate. Ser114 bears the Phosphoserine mark. Residues 130-171 (LDVTCNIKNGRCKQFCKLDADNKVVCSCTTGYQLAEDQKSCE) form the EGF-like 2 domain. Residues 193–231 (AETLFLNMDYENSTTDYENSAEAEKNVDNVTQPLNDLTR) constitute a propeptide, activation peptide. Tyr202 is subject to Sulfotyrosine. Ser205 bears the Phosphoserine mark. At Thr206 the chain carries Phosphothreonine; alternate. O-linked (GalNAc...) threonine; alternate glycosylation is present at Thr206. Residue Asn221 is glycosylated (N-linked (GlcNAc...) asparagine). O-linked (GalNAc...) threonine glycosylation is found at Thr223 and Thr230. Positions 232–464 (IVGGKTAKPG…YVNWIKEKTK (233 aa)) constitute a Peptidase S1 domain. His272 serves as the catalytic Charge relay system. Residues Glu286, Asn288, Glu291, Glu293, and Glu296 each contribute to the Ca(2+) site. Asp320 serves as the catalytic Charge relay system. Residue Ser416 is the Charge relay system of the active site.

It belongs to the peptidase S1 family. As to quaternary structure, heterodimer of a light chain and a heavy chain; disulfide-linked. Interacts (inactive and activated) with F11 (activated) in calcium-dependent manner. Interacts with SERPINC1. Post-translationally, the iron and 2-oxoglutarate dependent 3-hydroxylation of aspartate and asparagine is (R) stereospecific within EGF domains. Activated by factor XIa, which excises the activation peptide. The propeptide can also be removed by snake venom protease. Activated by coagulation factor VIIa-tissue factor (F7-F3) complex in calcium-dependent manner. In terms of processing, predominantly O-glucosylated at Ser-99 by POGLUT1 in vitro.

The protein resides in the secreted. The enzyme catalyses Selective cleavage of Arg-|-Ile bond in factor X to form factor Xa.. Functionally, factor IX is a vitamin K-dependent plasma protein that participates in the intrinsic pathway of blood coagulation by converting factor X to its active form in the presence of Ca(2+) ions, phospholipids, and factor VIIIa. This chain is Coagulation factor IX (F9), found in Felis catus (Cat).